Consider the following 234-residue polypeptide: Probable pectate lyase F (234 aa).

A signal peptide spans 1-17 (MFSRIALLPAFLPVALA). 2 N-linked (GlcNAc...) asparagine glycosylation sites follow: Asn168 and Asn194.

Belongs to the polysaccharide lyase 3 family. Ca(2+) is required as a cofactor.

The protein localises to the secreted. The catalysed reaction is Eliminative cleavage of (1-&gt;4)-alpha-D-galacturonan to give oligosaccharides with 4-deoxy-alpha-D-galact-4-enuronosyl groups at their non-reducing ends.. Functionally, pectinolytic enzyme consist of four classes of enzymes: pectin lyase, polygalacturonase, pectin methylesterase and rhamnogalacturonase. Among pectinolytic enzymes, pectin lyase is the most important in depolymerization of pectin, since it cleaves internal glycosidic bonds of highly methylated pectins. Favors pectate, the anion, over pectin, the methyl ester. The polypeptide is Probable pectate lyase F (plyF) (Aspergillus flavus (strain ATCC 200026 / FGSC A1120 / IAM 13836 / NRRL 3357 / JCM 12722 / SRRC 167)).